The chain runs to 1081 residues: Teashirt homolog 3 (1081 aa).

Disordered stretches follow at residues 25 to 104 (LVED…EVQV), 141 to 161 (PSSE…SSCG), and 238 to 257 (HYRD…WSKP). Positions 26–37 (VEDDVEPEEQAA) are enriched in acidic residues. The span at 68-87 (SSHEMDSESHISETSDRMAD) shows a compositional bias: basic and acidic residues. 2 consecutive C2H2-type zinc fingers follow at residues 214 to 238 (FRCK…ETGH) and 275 to 299 (LKCM…KTKH). Over residues 238-247 (HYRDDNHETD) the composition is skewed to basic and acidic residues. The disordered stretch occupies residues 325–346 (SLELELPSSPDSTGGTPKATLS). The segment at 387–410 (KCMECGSSHDTLQELTAHMMVTGH) adopts a C2H2-type 3; atypical zinc-finger fold. The span at 474-491 (VDKEKAVPDEKPKEREKP) shows a compositional bias: basic and acidic residues. Disordered stretches follow at residues 474–499 (VDKE…EKYD), 626–699 (EKMK…KPLS), 792–824 (LTKG…TVTT), and 855–897 (TESH…RQSN). The stretch at 606 to 630 (NFHAMEELVKKVTEKVAKVEEKMKE) forms a coiled coil. Over residues 660-670 (SDGSFKSQENS) the composition is skewed to polar residues. The residue at position 682 (S682) is a Phosphoserine. 2 stretches are compositionally biased toward low complexity: residues 800–824 (GCSL…TVTT) and 856–869 (ESHT…SSIS). A DNA-binding region (homeobox; atypical) is located at residues 891 to 961 (RKGRQSNWNP…NVKYQLRRTG (71 aa)). 2 C2H2-type zinc fingers span residues 976-998 (FFCN…LESH) and 1041-1064 (YQCK…SKTH).

It belongs to the teashirt C2H2-type zinc-finger protein family. In terms of assembly, interacts (via N-terminus) with HDAC1 and HDAC2; the interaction is direct. Found in a trimeric complex with APBB1 and HDAC1; the interaction between HDAC1 and APBB1 is mediated by TSHZ3. Interacts (via homeobox domain) with APBB1 (via PID domain 1). Expressed in corticostriatal neurons.

It localises to the nucleus. It is found in the cell projection. The protein localises to the growth cone. Functionally, transcriptional regulator involved in developmental processes. Functions in association with APBB1, SET and HDAC factors as a transcriptional repressor, that inhibits the expression of CASP4. TSHZ3-mediated transcription repression involves the recruitment of histone deacetylases HDAC1 and HDAC2. Associates with chromatin in a region surrounding the CASP4 transcriptional start site(s). Regulates the development of neurons involved in both respiratory rhythm and airflow control. Promotes maintenance of nucleus ambiguus (nA) motoneurons, which govern upper airway function, and establishes a respiratory rhythm generator (RRG) activity compatible with survival at birth. Involved in the differentiation of the proximal uretic smooth muscle cells during developmental processes. Involved in the up-regulation of myocardin, that directs the expression of smooth muscle cells in the proximal ureter. Involved in the modulation of glutamatergic synaptic transmission and long-term synaptic potentiation. This Mus musculus (Mouse) protein is Teashirt homolog 3 (Tshz3).